Consider the following 495-residue polypeptide: Cytochrome P450 monooxygenase aneF (495 aa).

A helical transmembrane segment spans residues 1–21 (MIAGLVLVVLLTKYLQRVFLH). N-linked (GlcNAc...) asparagine glycosylation occurs at asparagine 47. Cysteine 437 is a heme binding site.

It belongs to the cytochrome P450 family. Requires heme as cofactor.

The protein localises to the membrane. The catalysed reaction is dauca-4,7-diene + 3 reduced [NADPH--hemoprotein reductase] + 3 O2 = asperaculane D + 3 oxidized [NADPH--hemoprotein reductase] + 4 H2O + 4 H(+). It functions in the pathway secondary metabolite biosynthesis. Its function is as follows. Cytochrome P450 monooxygenase; part of the gene cluster that mediates the biosynthesis of aculenes, a unique type of norsesquiterpenes that contain a nordaucane skeleton linked to an L-proline moiety and are of mixed biosynthetic origin. The pathway begins with the synthesis of dauca-4,7-diene by the terpene cyclase aneC using farnesyl pyrophosphate (FPP) as substrate. The cytochrome P450 monooxygenase aneF then performs the initial oxidation at C-12 of dauca-4,7-diene to yield asperaculane D. Asperaculane D is substrate of the cytochrome P450 monooxygenase aneD for C-10 hydroxylation to yield asperaculane E. The cytochrome P450 monooxygenase aneG then converts asperaculane E into aculene D via C-2 oxidation. The monomodular nonribosomal peptide synthtase aneB adenylates L-proline and the thiohydrolase aneE transfers this activated L-proline derivative to aculenes D and C to produce respectively aculenes B and A. The dioxygenase aneA converts aculene D into aculene C, and aculene B into aculene A by introducing the 5,6-alkene moiety. Asperculanes A, B, C and F, as well as 14-prolyl asperculane C, might be shunt products of the pathway. The polypeptide is Cytochrome P450 monooxygenase aneF (Aspergillus aculeatus (strain ATCC 16872 / CBS 172.66 / WB 5094)).